The following is a 265-amino-acid chain: tRNA (guanine-N(7)-)-methyltransferase (265 aa).

Glu96, Glu121, Asp148, and Asp170 together coordinate S-adenosyl-L-methionine. Asp170 is an active-site residue. Substrate-binding residues include Lys174 and Asp206.

The protein belongs to the class I-like SAM-binding methyltransferase superfamily. TrmB family.

It catalyses the reaction guanosine(46) in tRNA + S-adenosyl-L-methionine = N(7)-methylguanosine(46) in tRNA + S-adenosyl-L-homocysteine. It participates in tRNA modification; N(7)-methylguanine-tRNA biosynthesis. Functionally, catalyzes the formation of N(7)-methylguanine at position 46 (m7G46) in tRNA. The sequence is that of tRNA (guanine-N(7)-)-methyltransferase from Rhodopseudomonas palustris (strain ATCC BAA-98 / CGA009).